The chain runs to 793 residues: E3 UFM1-protein ligase 1 (793 aa).

Residues 2–212 are required for E3 UFM1-protein ligase activity; it reads AADWEEIRRL…INNLLNLYGF (211 aa). 2 disordered regions span residues 405-472 and 745-793; these read ALLE…RNKL and GAEK…SVTE. A compositionally biased stretch (gly residues) spans 427–439; sequence EGGGSVKSGGGGN. Basic and acidic residues predominate over residues 767-781; the sequence is SLQRELHSLSRDIKD.

The protein belongs to the UFL1 family. As to quaternary structure, catalytic component of the UFM1 ribosome E3 ligase (UREL) complex. Interacts with E2-like enzyme UFC1.

The protein resides in the endoplasmic reticulum membrane. The protein localises to the cytoplasm. Its subcellular location is the cytosol. It is found in the nucleus. It localises to the chromosome. In terms of biological role, E3 protein ligase that mediates ufmylation, the covalent attachment of the ubiquitin-like modifier UFM1 to lysine residues on target proteins, and which plays a key role in various processes, such as ribosome recycling, response to DNA damage, interferon response or reticulophagy (also called ER-phagy). As part of the UREL complex, plays a key role in ribosome recycling by catalyzing mono-ufmylation of RPL26/uL24 subunit of the 60S ribosome. Ufmylation of RPL26/uL24 occurs on free 60S ribosomes following ribosome dissociation: it weakens the junction between post-termination 60S subunits and SEC61 translocons, promoting release and recycling of the large ribosomal subunit from the endoplasmic reticulum membrane. Ufmylation of RPL26/uL24 and subsequent 60S ribosome recycling either take place after normal termination of translation or after ribosome stalling during cotranslational translocation at the endoplasmic reticulum. Involved in reticulophagy in response to endoplasmic reticulum stress by mediating ufmylation of proteins such as CYB5R3 and RPN1, thereby promoting lysosomal degradation of ufmylated proteins. Ufmylation in response to endoplasmic reticulum stress is essential for processes such as hematopoiesis, blood vessel morphogenesis or inflammatory response. This is E3 UFM1-protein ligase 1 from Danio rerio (Zebrafish).